A 221-amino-acid polypeptide reads, in one-letter code: Large ribosomal subunit protein uL16y (221 aa).

It belongs to the universal ribosomal protein uL16 family. As to quaternary structure, component of the small ribosomal subunit. Mature ribosomes consist of a small (40S) and a large (60S) subunit. The 40S subunit contains about 33 different proteins and 1 molecule of RNA (18S). The 60S subunit contains about 49 different proteins and 3 molecules of RNA (25S, 5.8S and 5S).

This chain is Large ribosomal subunit protein uL16y (RPL10B), found in Arabidopsis thaliana (Mouse-ear cress).